An 863-amino-acid polypeptide reads, in one-letter code: Leucine--tRNA ligase (863 aa).

Positions 40 to 51 (PYPSGAGLHVGH) match the 'HIGH' region motif. A 'KMSKS' region motif is present at residues 635–639 (KMSKS). Lys638 provides a ligand contact to ATP.

It belongs to the class-I aminoacyl-tRNA synthetase family.

The protein resides in the cytoplasm. The enzyme catalyses tRNA(Leu) + L-leucine + ATP = L-leucyl-tRNA(Leu) + AMP + diphosphate. This is Leucine--tRNA ligase from Leptospira interrogans serogroup Icterohaemorrhagiae serovar Lai (strain 56601).